The following is a 252-amino-acid chain: ATP synthase subunit a (252 aa).

Helical transmembrane passes span 33–53 (GQVFITTWIVMGILIVAALAA), 92–112 (VPFVGTLFLFIFVCNWSGALV), 130–150 (DINTTVALALLVSLAYFYAGL), 196–216 (LVVGVLVLLVPLFVPLPVMAL), and 217–237 (GLFTSAIQALVFATLAATYIG).

Belongs to the ATPase A chain family. In terms of assembly, F-type ATPases have 2 components, CF(1) - the catalytic core - and CF(0) - the membrane proton channel. CF(1) has five subunits: alpha(3), beta(3), gamma(1), delta(1), epsilon(1). CF(0) has three main subunits: a(1), b(2) and c(9-12). The alpha and beta chains form an alternating ring which encloses part of the gamma chain. CF(1) is attached to CF(0) by a central stalk formed by the gamma and epsilon chains, while a peripheral stalk is formed by the delta and b chains.

The protein localises to the cellular thylakoid membrane. Its function is as follows. Key component of the proton channel; it plays a direct role in the translocation of protons across the membrane. The sequence is that of ATP synthase subunit a from Synechococcus sp. (strain PCC 6716).